Reading from the N-terminus, the 475-residue chain is Mitochondrial adenyl nucleotide antiporter SLC25A24 (475 aa).

Positions M1–D173 are regulatory N-terminal domain. Residues M1–Q197 lie on the Mitochondrial intermembrane side of the membrane. EF-hand domains follow at residues E19–P54, L55–E88, D86–H121, and I122–T157. 20 residues coordinate Ca(2+): D32, N34, D36, V38, E43, D68, N70, D72, K74, E79, D99, N101, D103, K105, E110, D135, D137, T139, T141, and E146. A linker region region spans residues I159 to H168. The tract at residues I174–K475 is C-terminal transmembrane transporter domain. Solcar repeat units follow at residues G192–L276, L284–Y369, and P381–T469. The helical transmembrane segment at L198 to L215 threads the bilayer. Residues D216–R250 are Mitochondrial matrix-facing. A helical transmembrane segment spans residues G251–Y270. Topologically, residues E271–G293 are mitochondrial intermembrane. The helical transmembrane segment at S294–M307 threads the bilayer. Residues E308–K343 lie on the Mitochondrial matrix side of the membrane. K318 carries the post-translational modification N6-acetyllysine; alternate. N6-succinyllysine; alternate is present on K318. Residue K334 is modified to N6-acetyllysine. A helical membrane pass occupies residues G344–Y363. The Mitochondrial intermembrane portion of the chain corresponds to E364–L386. The helical transmembrane segment at L387–L404 threads the bilayer. The Mitochondrial matrix segment spans residues A405–R443. Residue K435 is modified to N6-acetyllysine; alternate. Position 435 is an N6-succinyllysine; alternate (K435). The helical transmembrane segment at G444 to Y463 threads the bilayer. Residues E464 to K475 lie on the Mitochondrial intermembrane side of the membrane.

The protein belongs to the mitochondrial carrier (TC 2.A.29) family. As to quaternary structure, monomer.

Its subcellular location is the mitochondrion inner membrane. The catalysed reaction is Mg(2+)(out) + phosphate(in) + ATP(out) = Mg(2+)(in) + phosphate(out) + ATP(in). The enzyme catalyses ADP(out) + phosphate(in) + H(+)(out) = ADP(in) + phosphate(out) + H(+)(in). It carries out the reaction AMP(out) + phosphate(in) = AMP(in) + phosphate(out). It catalyses the reaction phosphate(in) + ATP(out) + 2 H(+)(out) = phosphate(out) + ATP(in) + 2 H(+)(in). The catalysed reaction is dADP(in) + ADP(out) = dADP(out) + ADP(in). The enzyme catalyses Mg(2+)(in) + ADP(out) + ATP(in) + H(+)(out) = Mg(2+)(out) + ADP(in) + ATP(out) + H(+)(in). It carries out the reaction ADP(out) + diphosphate(in) = ADP(in) + diphosphate(out). It catalyses the reaction dAMP(in) + ADP(out) + H(+)(out) = dAMP(out) + ADP(in) + H(+)(in). The catalysed reaction is 3'-AMP(in) + ADP(out) + H(+)(out) = 3'-AMP(out) + ADP(in) + H(+)(in). The enzyme catalyses dAMP(out) + phosphate(in) = dAMP(in) + phosphate(out). It carries out the reaction 3'-AMP(out) + phosphate(in) = 3'-AMP(in) + phosphate(out). It catalyses the reaction dADP(out) + phosphate(in) + H(+)(out) = dADP(in) + phosphate(out) + H(+)(in). Activated by an increase in cytosolic calcium levels that induce a conformational change of the N-terminal regulatory domain, uncapping the channel and allowing transport. Inhibited by bathophenanthroline, mersalyl, p-hydroxymercuribenzoate, bromcresol purple and tannic acid. Functionally, electroneutral antiporter that mediates the transport of adenyl nucleotides through the inner mitochondrial membrane. Originally identified as an ATP-magnesium/inorganic phosphate antiporter, it also acts as a broad specificity adenyl nucleotide antiporter. By regulating the mitochondrial matrix adenyl nucleotide pool could adapt to changing cellular energetic demands and indirectly regulate adenyl nucleotide-dependent metabolic pathways. In vitro, a low activity is also observed with guanyl and pyrimidine nucleotides. May play a role in protecting cells against oxidative stress-induced cell death, by buffering calcium levels in the mitochondrial matrix through the formation of calcium-phosphate precipitates. In Mus musculus (Mouse), this protein is Mitochondrial adenyl nucleotide antiporter SLC25A24.